An 872-amino-acid polypeptide reads, in one-letter code: Alanine--tRNA ligase (872 aa).

The Zn(2+) site is built by His566, His570, Cys668, and His672.

The protein belongs to the class-II aminoacyl-tRNA synthetase family. Requires Zn(2+) as cofactor.

The protein resides in the cytoplasm. The enzyme catalyses tRNA(Ala) + L-alanine + ATP = L-alanyl-tRNA(Ala) + AMP + diphosphate. Functionally, catalyzes the attachment of alanine to tRNA(Ala) in a two-step reaction: alanine is first activated by ATP to form Ala-AMP and then transferred to the acceptor end of tRNA(Ala). Also edits incorrectly charged Ser-tRNA(Ala) and Gly-tRNA(Ala) via its editing domain. This is Alanine--tRNA ligase from Lactococcus lactis subsp. lactis (strain IL1403) (Streptococcus lactis).